Consider the following 1224-residue polypeptide: DNA-directed RNA polymerase subunit beta'' (1224 aa).

Zn(2+) contacts are provided by Cys-233, Cys-308, Cys-315, and Cys-318.

This sequence belongs to the RNA polymerase beta' chain family. RpoC2 subfamily. As to quaternary structure, in plastids the minimal PEP RNA polymerase catalytic core is composed of four subunits: alpha, beta, beta', and beta''. When a (nuclear-encoded) sigma factor is associated with the core the holoenzyme is formed, which can initiate transcription. Zn(2+) is required as a cofactor.

It is found in the plastid. Its subcellular location is the chloroplast. It carries out the reaction RNA(n) + a ribonucleoside 5'-triphosphate = RNA(n+1) + diphosphate. DNA-dependent RNA polymerase catalyzes the transcription of DNA into RNA using the four ribonucleoside triphosphates as substrates. The protein is DNA-directed RNA polymerase subunit beta'' of Pinus thunbergii (Japanese black pine).